A 118-amino-acid polypeptide reads, in one-letter code: uncharacterized protein (118 aa).

Residues 1 to 118 (MASARGAKQS…AARQNEKTAR (118 aa)) form a disordered region. The span at 13 to 28 (RVGTTRYTETSTVRVE) shows a compositional bias: low complexity. The span at 29-49 (TSSHRVETSSRRVETSQRRSE) shows a compositional bias: basic and acidic residues.

This is an uncharacterized protein from Homo sapiens (Human).